We begin with the raw amino-acid sequence, 229 residues long: Prolactin (229 aa).

A signal peptide spans 1 to 30 (MDSKGSAQKGSRLLLLLVVSNLLLCQGVVS). Residues cysteine 34 and cysteine 41 are joined by a disulfide bond. Serine 56 bears the Phosphoserine mark. N-linked (GlcNAc...) asparagine; partial glycosylation occurs at asparagine 61. Phosphoserine occurs at positions 64 and 120. Disulfide bonds link cysteine 88-cysteine 204 and cysteine 221-cysteine 229.

It belongs to the somatotropin/prolactin family. Interacts with PRLR.

It localises to the secreted. Functionally, prolactin acts primarily on the mammary gland by promoting lactation, mammogenesis, mitogenesis and osmoregulation. The protein is Prolactin (PRL) of Ovis aries (Sheep).